We begin with the raw amino-acid sequence, 189 residues long: Elongation factor P (189 aa).

It belongs to the elongation factor P family.

The protein resides in the cytoplasm. It participates in protein biosynthesis; polypeptide chain elongation. Functionally, involved in peptide bond synthesis. Stimulates efficient translation and peptide-bond synthesis on native or reconstituted 70S ribosomes in vitro. Probably functions indirectly by altering the affinity of the ribosome for aminoacyl-tRNA, thus increasing their reactivity as acceptors for peptidyl transferase. In Phytoplasma australiense, this protein is Elongation factor P.